The chain runs to 80 residues: Small membrane A-kinase anchor protein (80 aa).

A lipid anchor (N-myristoyl glycine) is attached at Gly-2.

It belongs to the small membrane AKAP family. Post-translationally, may be palmitoylated at Cys-3.

The protein resides in the cell membrane. Its function is as follows. Binds to type I regulatory subunits of protein kinase A and may anchor/target them to the plasma membrane. The sequence is that of Small membrane A-kinase anchor protein from Tetraodon nigroviridis (Spotted green pufferfish).